The primary structure comprises 422 residues: Nucleoside transporter 1 (422 aa).

The Cytoplasmic segment spans residues 1–38 (MSTGKESSKAYADIESRGDYKDDGKKGSTLSSKQHFML). A helical membrane pass occupies residues 39-59 (SLTFILIGLSSLNVWNTALGL). W53 contacts inosine. At 60–63 (NINF) the chain is on the extracellular side. The chain crosses the membrane as a helical span at residues 64-82 (KYNTFQITGLVCSSIVALF). The Cytoplasmic portion of the chain corresponds to 83–87 (VEIPK). Residues 88-107 (IMLPFLLGGLSILCAGFQIS) form a helical membrane-spanning segment. The Extracellular segment spans residues 108 to 116 (HSFFTDTQF). Residues 117–139 (DTYCLVAFIVIGVVAGLAQTIAF) traverse the membrane as a helical segment. Q135 lines the inosine pocket. Residues 140 to 149 (NIGSTMEDNM) are Cytoplasmic-facing. Residues 150 to 174 (GGYMSAGIGISGVFIFVINLLLDQF) traverse the membrane as a helical segment. Residues 175-185 (VSPEKHYGVNK) lie on the Extracellular side of the membrane. A helical membrane pass occupies residues 186 to 208 (AKLLYLYIICELCLILAIVFCVC). The Cytoplasmic portion of the chain corresponds to 209–241 (NLDLTNKNNKKDEENKENNATLSYMELFKDSYK). A helical membrane pass occupies residues 242-265 (AILTMFLVNWLTLQLFPGVGHKKW). At 266 to 274 (QESHNISDY) the chain is on the extracellular side. A helical membrane pass occupies residues 275 to 294 (NVTIIVGMFQVFDFLSRYPP). Positions 287 and 291 each coordinate inosine. Over 295–309 (NLTHIKIFKNFTFSL) the chain is Cytoplasmic. The helical transmembrane segment at 310–330 (NKLLVANSLRLLFIPWFILNA) threads the bilayer. Residues 331 to 338 (CVDHPFFK) are Extracellular-facing. A helical transmembrane segment spans residues 339 to 362 (NIVQQCVCMAMLAFTNGWFNTVPF). Residues 363 to 374 (LVFVKELKKAKK) are Cytoplasmic-facing. Residues 375–397 (KKEIEIISTFLVIAMFVGLFCGI) traverse the membrane as a helical segment. Residues 398–422 (WTTYIYNLFNIVLPKPDLPPIDVTQ) lie on the Extracellular side of the membrane.

The protein belongs to the SLC29A/ENT transporter (TC 2.A.57) family.

The protein resides in the cell membrane. The catalysed reaction is inosine(in) = inosine(out). It catalyses the reaction adenosine(in) = adenosine(out). The enzyme catalyses hypoxanthine(out) = hypoxanthine(in). It carries out the reaction guanosine(in) = guanosine(out). The catalysed reaction is guanine(out) = guanine(in). It catalyses the reaction thymidine(in) = thymidine(out). The enzyme catalyses uridine(out) = uridine(in). It carries out the reaction uracil(in) = uracil(out). The catalysed reaction is thymine(out) = thymine(in). It catalyses the reaction adenine(out) = adenine(in). The enzyme catalyses cytosine(out) = cytosine(in). It carries out the reaction xanthine(out) = xanthine(in). GSK4 (5-methyl-N-[2-(2-oxo-1-azepanyl)ethyl]-2-phenyl-1,3-oxazole-4-carbox-amide) disrupts the transport activity at 500 nM. Inhibited partially by 10 uM dipyridamole. Inhibited partially by N,N'-1,3-benzothiazole-2,6-diyldi(2-furamide), 2-bromo-N-(4-[1,3]oxazolo[4,5-b]pyridin-2-ylphenyl)benzamide, 4-methyl-7-[(3,4,5-trimethoxybenzyl)oxy]-2H-chromen-2-one, 2-(1-methyl-1H-indol-3-yl)-2-oxo-N-[4-(pyrrolidin-1-ylcarbonyl)phenyl]acet amide and 2-[2-(2-methylphenyl)vinyl]-4(3H)-quinazolinone. In terms of biological role, sodium-independent nucleoside and nucleobase transporter with a broad substrate specificity. Plays a key role in the utilization of host purine sources by P.falciparum during intraerythrocytic development enabling parasite growth in the presence of physiological concentrations of adenosine, inosine, guanine, guanosine, xanthine and hypoxanthine. Essential for parasite transition from ring to trophozoite or from trophozoite to schizont stage but not for erythrocyte invasion by merozoites. This is Nucleoside transporter 1 from Plasmodium falciparum (isolate 3D7).